The sequence spans 375 residues: Homoserine O-succinyltransferase (375 aa).

Residues 48-358 (NAVLVCHALS…PAGHDSFLLD (311 aa)) form the AB hydrolase-1 domain. Catalysis depends on S154, which acts as the Nucleophile. R224 is a substrate binding site. Catalysis depends on residues D319 and H352. Residue D353 coordinates substrate.

The protein belongs to the AB hydrolase superfamily. MetX family. In terms of assembly, homodimer.

The protein resides in the cytoplasm. The enzyme catalyses L-homoserine + succinyl-CoA = O-succinyl-L-homoserine + CoA. The protein operates within amino-acid biosynthesis; L-methionine biosynthesis via de novo pathway; O-succinyl-L-homoserine from L-homoserine: step 1/1. In terms of biological role, transfers a succinyl group from succinyl-CoA to L-homoserine, forming succinyl-L-homoserine. This Azoarcus sp. (strain BH72) protein is Homoserine O-succinyltransferase.